We begin with the raw amino-acid sequence, 382 residues long: MNEVYVFTSESVSEGHPDKIADQISDAILDAILAQDPKARVACEVLVKTGMVLVGGEITTKAWVDVEEITRHVIKDIGYNSSQMGFDWESCAVLSAIGKQSPDIAQGVDNQQTKILGAGDQGLMFGYASRETDVFMPAPIAYAHRLMEKLAKARKSGQLPWLRPDAKCQLTLKYEQGMPVEVDTVVFSTQHSPDIEHKDLVEAIREEIIKSVLPAEWLNDKTRYFINPTGRFVIGGPLGDCGLTGRKIIVDTYGGMARHGGGCFSGKDPSKVDRSAAYAARHVAKNIVAAGLADKCELQISYAIGVAEPTSIFVDTFGTGRLKNSEIIDLIHTHFDLTPQGIIDQHDLLRPIYRQTATYGHYGRESFPWERLDKVAELSKAL.

His16 lines the ATP pocket. Asp18 contacts Mg(2+). A K(+)-binding site is contributed by Glu44. Residues Glu57 and Gln100 each contribute to the L-methionine site. The segment at 100–110 is flexible loop; the sequence is QSPDIAQGVDN. ATP is bound by residues 165–167, 231–232, Asp240, 246–247, and Lys267; these read DAK, RF, and RK. Asp240 contributes to the L-methionine binding site. Lys271 contributes to the L-methionine binding site.

This sequence belongs to the AdoMet synthase family. Homotetramer; dimer of dimers. It depends on Mg(2+) as a cofactor. The cofactor is K(+).

It is found in the cytoplasm. The catalysed reaction is L-methionine + ATP + H2O = S-adenosyl-L-methionine + phosphate + diphosphate. Its pathway is amino-acid biosynthesis; S-adenosyl-L-methionine biosynthesis; S-adenosyl-L-methionine from L-methionine: step 1/1. In terms of biological role, catalyzes the formation of S-adenosylmethionine (AdoMet) from methionine and ATP. The overall synthetic reaction is composed of two sequential steps, AdoMet formation and the subsequent tripolyphosphate hydrolysis which occurs prior to release of AdoMet from the enzyme. The chain is S-adenosylmethionine synthase from Legionella pneumophila subsp. pneumophila (strain Philadelphia 1 / ATCC 33152 / DSM 7513).